Reading from the N-terminus, the 962-residue chain is Translation initiation factor IF-2 (962 aa).

The tract at residues 101 to 366 is disordered; that stretch reads AAQTQAAPVR…KKGKKLKLEP (266 aa). The segment covering 117–141 has biased composition (basic and acidic residues); that stretch reads DAAKARAEAATRAEARAKAEAEAAK. Low complexity predominate over residues 145-157; it reads AKAGNKAKPAAQK. The span at 173 to 216 shows a compositional bias: basic and acidic residues; it reads KPAEESKAEKAQADKMPSKKPAEPKEKAAKPKHERNGKGKDAKK. Over residues 219 to 234 the composition is skewed to low complexity; sequence KPAAPAVPQPVVSAEE. The span at 235–269 shows a compositional bias: basic and acidic residues; that stretch reads QAQRDEEARRAAALRAHQEALLKEKQERQARREAM. The span at 270–283 shows a compositional bias: low complexity; it reads KQQAEQQAKAAQEA. Basic and acidic residues predominate over residues 338–354; it reads GGRDRNNARNGDDERVR. The tr-type G domain occupies 462-631; that stretch reads PRPPVVTVMG…LLEAEVLELT (170 aa). The interval 471-478 is G1; it reads GHVDHGKT. Position 471–478 (471–478) interacts with GTP; it reads GHVDHGKT. A G2 region spans residues 496–500; that stretch reads GITQH. Residues 517 to 520 form a G3 region; it reads DTPG. Residues 517-521 and 571-574 each bind GTP; these read DTPGH and NKID. The G4 stretch occupies residues 571–574; that stretch reads NKID. Positions 607 to 609 are G5; it reads SAK.

Belongs to the TRAFAC class translation factor GTPase superfamily. Classic translation factor GTPase family. IF-2 subfamily.

Its subcellular location is the cytoplasm. Functionally, one of the essential components for the initiation of protein synthesis. Protects formylmethionyl-tRNA from spontaneous hydrolysis and promotes its binding to the 30S ribosomal subunits. Also involved in the hydrolysis of GTP during the formation of the 70S ribosomal complex. The chain is Translation initiation factor IF-2 from Neisseria meningitidis serogroup A / serotype 4A (strain DSM 15465 / Z2491).